The sequence spans 218 residues: Thiamine-phosphate synthase (218 aa).

Residues 43–47 and N78 contribute to the 4-amino-2-methyl-5-(diphosphooxymethyl)pyrimidine site; that span reads QFRDK. D79 and D98 together coordinate Mg(2+). S117 lines the 4-amino-2-methyl-5-(diphosphooxymethyl)pyrimidine pocket. Residue 143–145 coordinates 2-[(2R,5Z)-2-carboxy-4-methylthiazol-5(2H)-ylidene]ethyl phosphate; that stretch reads TNS. K146 is a 4-amino-2-methyl-5-(diphosphooxymethyl)pyrimidine binding site. Residues G174 and 194-195 each bind 2-[(2R,5Z)-2-carboxy-4-methylthiazol-5(2H)-ylidene]ethyl phosphate; that span reads IS.

Belongs to the thiamine-phosphate synthase family. Mg(2+) is required as a cofactor.

The catalysed reaction is 2-[(2R,5Z)-2-carboxy-4-methylthiazol-5(2H)-ylidene]ethyl phosphate + 4-amino-2-methyl-5-(diphosphooxymethyl)pyrimidine + 2 H(+) = thiamine phosphate + CO2 + diphosphate. It carries out the reaction 2-(2-carboxy-4-methylthiazol-5-yl)ethyl phosphate + 4-amino-2-methyl-5-(diphosphooxymethyl)pyrimidine + 2 H(+) = thiamine phosphate + CO2 + diphosphate. The enzyme catalyses 4-methyl-5-(2-phosphooxyethyl)-thiazole + 4-amino-2-methyl-5-(diphosphooxymethyl)pyrimidine + H(+) = thiamine phosphate + diphosphate. The protein operates within cofactor biosynthesis; thiamine diphosphate biosynthesis; thiamine phosphate from 4-amino-2-methyl-5-diphosphomethylpyrimidine and 4-methyl-5-(2-phosphoethyl)-thiazole: step 1/1. Functionally, condenses 4-methyl-5-(beta-hydroxyethyl)thiazole monophosphate (THZ-P) and 2-methyl-4-amino-5-hydroxymethyl pyrimidine pyrophosphate (HMP-PP) to form thiamine monophosphate (TMP). This is Thiamine-phosphate synthase from Lactococcus lactis subsp. cremoris (strain SK11).